Reading from the N-terminus, the 169-residue chain is MSSYQQKQTFTPPPQLQQQQVKQPSQPPPQEIFVPTTKEPCHSKVPQPGNTKIPEPGCTKVPEPGCTKVPEPGCTKVPEPGCTKVPEPGCTKVPEPGCTKVPEPGYTKVPEPGSIKVPDQGFIKFPEPGAIKVPEQGYTKVPVPGYTKLPEPCPSTVTPGPAQQKTKQK.

Positions methionine 1–proline 24 are enriched in low complexity. Residues methionine 1–glycine 57 are disordered. Serine 2 is subject to N-acetylserine. A run of 14 repeats spans residues serine 43–asparagine 50, threonine 51–cysteine 58, threonine 59–cysteine 66, threonine 67–cysteine 74, threonine 75–cysteine 82, threonine 83–cysteine 90, threonine 91–cysteine 98, threonine 99–tyrosine 106, threonine 107–serine 114, isoleucine 115–phenylalanine 122, isoleucine 123–alanine 130, isoleucine 131–tyrosine 138, threonine 139–tyrosine 146, and threonine 147–proline 154. Positions serine 43–proline 154 are 14 X 8 AA approximate tandem repeats. Positions proline 150–lysine 169 are disordered. The span at serine 155–lysine 169 shows a compositional bias: polar residues.

It localises to the cytoplasm. Functionally, cross-linked envelope protein of keratinocytes. This chain is Small proline-rich protein 3 (SPRR3), found in Homo sapiens (Human).